We begin with the raw amino-acid sequence, 237 residues long: Protein-S-isoprenylcysteine O-methyltransferase (237 aa).

4 helical membrane passes run 26–46, 53–73, 92–112, and 116–136; these read SSAI…LFIF, FGIY…WVTM, FNMA…FFPS, and FSLW…RSVA. S-adenosyl-L-methionine contacts are provided by residues glutamine 149, 156 to 159, tyrosine 164, and 169 to 172; these read HVLV and HPSY. Residues 184–204 form a helical membrane-spanning segment; sequence VILMNPISIIGFGWASWSFFS. Substrate is bound at residue arginine 206. Glutamate 210 provides a ligand contact to S-adenosyl-L-methionine.

It belongs to the class VI-like SAM-binding methyltransferase superfamily. Isoprenylcysteine carboxyl methyltransferase family.

The protein localises to the endoplasmic reticulum membrane. The catalysed reaction is [protein]-C-terminal S-[(2E,6E)-farnesyl]-L-cysteine + S-adenosyl-L-methionine = [protein]-C-terminal S-[(2E,6E)-farnesyl]-L-cysteine methyl ester + S-adenosyl-L-homocysteine. Methylates the C-terminal cysteine residues of small GTPases and the heterotrimeric G protein gamma subunit in response to cAMP. The methylation is required for intercellular signaling and regulation of cAMP waves propagation. It also seems to induce the activity of car1, a G protein-coupled receptor which senses extracellular cAMP during the aggregation phase of development. The polypeptide is Protein-S-isoprenylcysteine O-methyltransferase (icmt-1) (Dictyostelium discoideum (Social amoeba)).